The following is a 497-amino-acid chain: Replication factor C large subunit (497 aa).

50-57 (GPAGVGKT) provides a ligand contact to ATP. The span at 428 to 455 (KRRSLGRDEGKAFFEKKPKKQTPDKKQM) shows a compositional bias: basic and acidic residues. The interval 428-497 (KRRSLGRDEG…AKPQKTLFDF (70 aa)) is disordered. Over residues 456 to 465 (DLTQIINSTP) the composition is skewed to polar residues. The segment covering 466 to 476 (QEDKVEKKETE) has biased composition (basic and acidic residues).

Belongs to the activator 1 small subunits family. RfcL subfamily. Heteromultimer composed of small subunits (RfcS) and large subunits (RfcL).

In terms of biological role, part of the RFC clamp loader complex which loads the PCNA sliding clamp onto DNA. The protein is Replication factor C large subunit of Methanococcoides burtonii (strain DSM 6242 / NBRC 107633 / OCM 468 / ACE-M).